Reading from the N-terminus, the 256-residue chain is Proteasome subunit alpha (256 aa).

A disordered region spans residues 226-256; it reads LLPSQEESGSTDGEASGDAGDDKKTGDDKKS. Residues 245–256 show a composition bias toward basic and acidic residues; the sequence is GDDKKTGDDKKS.

This sequence belongs to the peptidase T1A family. In terms of assembly, the 20S proteasome core is composed of 14 alpha and 14 beta subunits that assemble into four stacked heptameric rings, resulting in a barrel-shaped structure. The two inner rings, each composed of seven catalytic beta subunits, are sandwiched by two outer rings, each composed of seven alpha subunits. The catalytic chamber with the active sites is on the inside of the barrel. Has a gated structure, the ends of the cylinder being occluded by the N-termini of the alpha-subunits. Is capped by the proteasome-associated ATPase, ARC.

Its subcellular location is the cytoplasm. It participates in protein degradation; proteasomal Pup-dependent pathway. With respect to regulation, the formation of the proteasomal ATPase ARC-20S proteasome complex, likely via the docking of the C-termini of ARC into the intersubunit pockets in the alpha-rings, may trigger opening of the gate for substrate entry. Interconversion between the open-gate and close-gate conformations leads to a dynamic regulation of the 20S proteasome proteolysis activity. Component of the proteasome core, a large protease complex with broad specificity involved in protein degradation. This is Proteasome subunit alpha from Saccharopolyspora erythraea (strain ATCC 11635 / DSM 40517 / JCM 4748 / NBRC 13426 / NCIMB 8594 / NRRL 2338).